Reading from the N-terminus, the 113-residue chain is Large ribosomal subunit protein uL22 (113 aa).

Belongs to the universal ribosomal protein uL22 family. In terms of assembly, part of the 50S ribosomal subunit.

Functionally, this protein binds specifically to 23S rRNA; its binding is stimulated by other ribosomal proteins, e.g. L4, L17, and L20. It is important during the early stages of 50S assembly. It makes multiple contacts with different domains of the 23S rRNA in the assembled 50S subunit and ribosome. The globular domain of the protein is located near the polypeptide exit tunnel on the outside of the subunit, while an extended beta-hairpin is found that lines the wall of the exit tunnel in the center of the 70S ribosome. The polypeptide is Large ribosomal subunit protein uL22 (Geobacillus stearothermophilus (Bacillus stearothermophilus)).